Consider the following 153-residue polypeptide: Endoribonuclease YbeY (153 aa).

Zn(2+)-binding residues include H118, H122, and H128.

It belongs to the endoribonuclease YbeY family. The cofactor is Zn(2+).

The protein resides in the cytoplasm. Its function is as follows. Single strand-specific metallo-endoribonuclease involved in late-stage 70S ribosome quality control and in maturation of the 3' terminus of the 16S rRNA. The polypeptide is Endoribonuclease YbeY (Staphylococcus saprophyticus subsp. saprophyticus (strain ATCC 15305 / DSM 20229 / NCIMB 8711 / NCTC 7292 / S-41)).